Reading from the N-terminus, the 97-residue chain is Citrate lyase acyl carrier protein (97 aa).

The residue at position 14 (Ser14) is an O-(phosphoribosyl dephospho-coenzyme A)serine.

This sequence belongs to the CitD family. As to quaternary structure, oligomer with a subunit composition of (alpha,beta,gamma)6.

The protein resides in the cytoplasm. Covalent carrier of the coenzyme of citrate lyase. This chain is Citrate lyase acyl carrier protein, found in Enterobacter sp. (strain 638).